The primary structure comprises 159 residues: NAD(P)H-quinone oxidoreductase subunit J, chloroplastic (159 aa).

This sequence belongs to the complex I 30 kDa subunit family. As to quaternary structure, NDH is composed of at least 16 different subunits, 5 of which are encoded in the nucleus.

The protein localises to the plastid. It localises to the chloroplast thylakoid membrane. It carries out the reaction a plastoquinone + NADH + (n+1) H(+)(in) = a plastoquinol + NAD(+) + n H(+)(out). The catalysed reaction is a plastoquinone + NADPH + (n+1) H(+)(in) = a plastoquinol + NADP(+) + n H(+)(out). In terms of biological role, NDH shuttles electrons from NAD(P)H:plastoquinone, via FMN and iron-sulfur (Fe-S) centers, to quinones in the photosynthetic chain and possibly in a chloroplast respiratory chain. The immediate electron acceptor for the enzyme in this species is believed to be plastoquinone. Couples the redox reaction to proton translocation, and thus conserves the redox energy in a proton gradient. This is NAD(P)H-quinone oxidoreductase subunit J, chloroplastic from Agrostis stolonifera (Creeping bentgrass).